A 178-amino-acid polypeptide reads, in one-letter code: Large ribosomal subunit protein uL6 (178 aa).

This sequence belongs to the universal ribosomal protein uL6 family. In terms of assembly, part of the 50S ribosomal subunit.

Its function is as follows. This protein binds to the 23S rRNA, and is important in its secondary structure. It is located near the subunit interface in the base of the L7/L12 stalk, and near the tRNA binding site of the peptidyltransferase center. The sequence is that of Large ribosomal subunit protein uL6 from Streptococcus pneumoniae serotype 19F (strain G54).